We begin with the raw amino-acid sequence, 144 residues long: Superoxide dismutase [Mn], mitochondrial (144 aa).

Residues H10, H58, and D143 each coordinate Mn(2+).

Belongs to the iron/manganese superoxide dismutase family. In terms of assembly, homotetramer. Mn(2+) serves as cofactor.

The protein localises to the mitochondrion matrix. The enzyme catalyses 2 superoxide + 2 H(+) = H2O2 + O2. Its function is as follows. Destroys superoxide anion radicals which are normally produced within the cells and which are toxic to biological systems. The sequence is that of Superoxide dismutase [Mn], mitochondrial from Palinurus vulgaris (European spiny lobster).